Consider the following 82-residue polypeptide: RNA-binding protein Hfq (82 aa).

The region spanning 11–71 is the Sm domain; that stretch reads DTFLNSVRKS…ISTIMPAQPV (61 aa).

It belongs to the Hfq family. Homohexamer.

Its function is as follows. RNA chaperone that binds small regulatory RNA (sRNAs) and mRNAs to facilitate mRNA translational regulation in response to envelope stress, environmental stress and changes in metabolite concentrations. Also binds with high specificity to tRNAs. This is RNA-binding protein Hfq from Caulobacter sp. (strain K31).